We begin with the raw amino-acid sequence, 187 residues long: Elongation factor P (187 aa).

This sequence belongs to the elongation factor P family.

It is found in the cytoplasm. The protein operates within protein biosynthesis; polypeptide chain elongation. Involved in peptide bond synthesis. Stimulates efficient translation and peptide-bond synthesis on native or reconstituted 70S ribosomes in vitro. Probably functions indirectly by altering the affinity of the ribosome for aminoacyl-tRNA, thus increasing their reactivity as acceptors for peptidyl transferase. The sequence is that of Elongation factor P from Corynebacterium urealyticum (strain ATCC 43042 / DSM 7109).